Reading from the N-terminus, the 270-residue chain is Putative phosphoenolpyruvate synthase regulatory protein (270 aa).

150-157 (GVSRSGKT) contributes to the ADP binding site.

This sequence belongs to the pyruvate, phosphate/water dikinase regulatory protein family. PSRP subfamily.

The enzyme catalyses [pyruvate, water dikinase] + ADP = [pyruvate, water dikinase]-phosphate + AMP + H(+). It carries out the reaction [pyruvate, water dikinase]-phosphate + phosphate + H(+) = [pyruvate, water dikinase] + diphosphate. In terms of biological role, bifunctional serine/threonine kinase and phosphorylase involved in the regulation of the phosphoenolpyruvate synthase (PEPS) by catalyzing its phosphorylation/dephosphorylation. This is Putative phosphoenolpyruvate synthase regulatory protein from Cupriavidus metallidurans (strain ATCC 43123 / DSM 2839 / NBRC 102507 / CH34) (Ralstonia metallidurans).